A 194-amino-acid chain; its full sequence is Large ribosomal subunit protein eL15 (194 aa).

The segment at Ala158 to Lys194 is disordered.

The protein belongs to the eukaryotic ribosomal protein eL15 family.

This is Large ribosomal subunit protein eL15 from Methanococcus maripaludis (strain DSM 14266 / JCM 13030 / NBRC 101832 / S2 / LL).